The following is a 1102-amino-acid chain: MPKRTDIQSVLVIGSGPIVIGQAAEFDYSGTQACRVLKAEGLRVVLVNSNPATIMTDPEIADATYVEPITPEFVEKIIAKERPDALLPTLGGQTALNTAISLHGNGVLEKYGVELIGANVEAINKGEDRDLFKEVVEEVRKKIGHGESARSYICHSMDDVLKGVDALGGYPVVVRPSFTMGGAGSGFAHDEDELRRIAGQGLTLSPTTEVLLEESILGWKEYELELMRDKNDNVVVVCSIENFDPMGVHTGDSITVAPAMTLTDREYQTLRDVGIAIIREVGVDTGGCNIQFAVNPEDGRVIVIEMNPRVSRSSALASKATGFPIAKIAAKLAVGYTLDEIPNDITQETPASFEPTLDYVVVKAPRFAFEKFPSADSTLTTTMKSVGEAMAIGRNFTEAFQKALRSLEKKGSQFTFVGEPGDKDELLREAVRPTDGRINAVMQAIRAGATPEEVFDATKIDPWFVDQLFLIKEIADEIAESRELTADLLTEAKRHGFSDQQIAEISGLGEDVVRQVRHALGVRPVYKTVDTCAAEFAARTPYFYSSYDEESEVAPREKPAVIILGSGPNRIGQGIEFDYSCVHASFALSDAGYETVMVNCNPETVSTDYDTSDRLYFEPLTLEDVLEIVHAEQQAGPVAGVIVQLGGQTPLGLSQALKDNGVPVVGTSPEAIHAAEDRGAFGRVLAEAGLPAPKHGTATTFGEAKAIADEIGYPVLVRPSYVLGGRGMEIVYDETRLEAYIAESTEISPSRPVLVDRFLDDAIEIDVDALYDGEELYLGGVMEHIEEAGIHSGDSACALPPITLGGFDIKRLRASTEGIAKGVGVRGLINIQFALAGDILYVLEANPRASRTVPFTSKATAVPLAKAAARISLGATIAELRAEGLLPALGDGGTLPLDAPISVKEAVMPWSRFRDIHGRGVDTVLGPEMRSTGEVMGIDSVFGTAYAKSQAGAYGPLPTKGRAFISVANRDKRSMIFPARELVAHGFELMATSGTAEVLKRNGINATVVRKQSEGTGPNGEKTIVQLIHDGEVDLIVNTPYGTSGRLDGYDIRTAAVARSVPCLTTVQALAAAVQGIDALNHGDVGVRSLQEHAAFLIAARD.

The carboxyphosphate synthetic domain stretch occupies residues 1–408 (MPKRTDIQSV…AFQKALRSLE (408 aa)). Residues Arg-129, Arg-175, Gly-181, Gly-182, Glu-214, Ile-216, Glu-221, Gly-247, Val-248, His-249, Gln-291, and Glu-305 each coordinate ATP. In terms of domain architecture, ATP-grasp 1 spans 137-334 (EEVRKKIGHG…IAKIAAKLAV (198 aa)). Residues Gln-291, Glu-305, and Asn-307 each coordinate Mg(2+). Residues Gln-291, Glu-305, and Asn-307 each contribute to the Mn(2+) site. The tract at residues 409 to 551 (KKGSQFTFVG…YFYSSYDEES (143 aa)) is oligomerization domain. The interval 552–954 (EVAPREKPAV…AYAKSQAGAY (403 aa)) is carbamoyl phosphate synthetic domain. The 192-residue stretch at 682–873 (GRVLAEAGLP…LAKAAARISL (192 aa)) folds into the ATP-grasp 2 domain. Arg-718, Arg-757, Leu-759, Glu-764, Gly-789, Ile-790, His-791, Ser-792, Gln-832, and Glu-844 together coordinate ATP. Gln-832, Glu-844, and Asn-846 together coordinate Mg(2+). The Mn(2+) site is built by Gln-832, Glu-844, and Asn-846. In terms of domain architecture, MGS-like spans 955–1100 (GPLPTKGRAF…QEHAAFLIAA (146 aa)). Residues 955–1102 (GPLPTKGRAF…HAAFLIAARD (148 aa)) form an allosteric domain region.

This sequence belongs to the CarB family. Composed of two chains; the small (or glutamine) chain promotes the hydrolysis of glutamine to ammonia, which is used by the large (or ammonia) chain to synthesize carbamoyl phosphate. Tetramer of heterodimers (alpha,beta)4. It depends on Mg(2+) as a cofactor. The cofactor is Mn(2+).

It carries out the reaction hydrogencarbonate + L-glutamine + 2 ATP + H2O = carbamoyl phosphate + L-glutamate + 2 ADP + phosphate + 2 H(+). The enzyme catalyses hydrogencarbonate + NH4(+) + 2 ATP = carbamoyl phosphate + 2 ADP + phosphate + 2 H(+). Its pathway is amino-acid biosynthesis; L-arginine biosynthesis; carbamoyl phosphate from bicarbonate: step 1/1. It functions in the pathway pyrimidine metabolism; UMP biosynthesis via de novo pathway; (S)-dihydroorotate from bicarbonate: step 1/3. Functionally, large subunit of the glutamine-dependent carbamoyl phosphate synthetase (CPSase). CPSase catalyzes the formation of carbamoyl phosphate from the ammonia moiety of glutamine, carbonate, and phosphate donated by ATP, constituting the first step of 2 biosynthetic pathways, one leading to arginine and/or urea and the other to pyrimidine nucleotides. The large subunit (synthetase) binds the substrates ammonia (free or transferred from glutamine from the small subunit), hydrogencarbonate and ATP and carries out an ATP-coupled ligase reaction, activating hydrogencarbonate by forming carboxy phosphate which reacts with ammonia to form carbamoyl phosphate. In Streptomyces coelicolor (strain ATCC BAA-471 / A3(2) / M145), this protein is Carbamoyl phosphate synthase large chain.